We begin with the raw amino-acid sequence, 871 residues long: Metabotropic glutamate receptor 6 (871 aa).

A signal peptide spans 1-23 (MGRLPVLLLWLAWWLSQAGIACG). The Extracellular segment spans residues 24–579 (AGSVRLAGGL…VVRLTWSSPW (556 aa)). A disulfide bridge connects residues Cys51 and Cys93. L-glutamate contacts are provided by residues Ser148, 169–171 (AST), and Tyr219. 7 cysteine pairs are disulfide-bonded: Cys238–Cys530, Cys361–Cys377, Cys417–Cys424, Cys512–Cys531, Cys516–Cys534, Cys537–Cys549, and Cys552–Cys565. An N-linked (GlcNAc...) asparagine glycan is attached at Asn290. Asp301 lines the L-glutamate pocket. Lys394 contacts L-glutamate. Asn445 and Asn473 each carry an N-linked (GlcNAc...) asparagine glycan. The N-linked (GlcNAc...) asparagine glycan is linked to Asn561. The helical transmembrane segment at 580-602 (AALPLLLAVLGIMATTTIMATFM) threads the bilayer. Residues 603–616 (RHNDTPIVRASGRE) are Cytoplasmic-facing. A helical transmembrane segment spans residues 617 to 637 (LSYVLLTGIFLIYAITFLMVA). Over 638–648 (EPCAAICAARR) the chain is Extracellular. A helical transmembrane segment spans residues 649-667 (LLLGLGTTLSYSALLTKTN). The Cytoplasmic segment spans residues 668-691 (RIYRIFEQGKRSVTPPPFISPTSQ). A helical membrane pass occupies residues 692 to 712 (LVITFGLTSLQVVGVIAWLGA). The Extracellular segment spans residues 713–742 (QPPHSVIDYEEQRTVDPEQARGVLKCDMSD). The chain crosses the membrane as a helical span at residues 743–764 (LSLIGCLGYSLLLMVTCTVYAI). Residues 765-777 (KARGVPETFNEAK) are Cytoplasmic-facing. The chain crosses the membrane as a helical span at residues 778 to 800 (PIGFTMYTTCIIWLAFVPIFFGT). At 801-813 (AQSAEKIYIQTTT) the chain is on the extracellular side. Residues 814-839 (LTVSLSLSASVSLGMLYVPKTYVILF) form a helical membrane-spanning segment. Topologically, residues 840 to 871 (HPEQNVQKRKRSLKKTSTMAAPPQNENAEDAK) are cytoplasmic. A disordered region spans residues 850 to 871 (RSLKKTSTMAAPPQNENAEDAK).

Belongs to the G-protein coupled receptor 3 family. As to quaternary structure, homodimer. Interacts with GPR179. Interacts with photoreceptor synaptic protein LRIT1 (via its N-terminal extracellular domain). In terms of tissue distribution, restricted expression in the inner nuclear layer of the retina.

The protein resides in the cell membrane. The protein localises to the endoplasmic reticulum membrane. It is found in the golgi apparatus membrane. Its subcellular location is the cell projection. It localises to the dendrite. G-protein coupled receptor for glutamate. Ligand binding causes a conformation change that triggers signaling via guanine nucleotide-binding proteins (G proteins) and modulates the activity of down-stream effectors, such as adenylate cyclase. Signaling inhibits adenylate cyclase activity. Signaling stimulates TRPM1 channel activity and Ca(2+) uptake. Required for normal vision. The sequence is that of Metabotropic glutamate receptor 6 (Grm6) from Rattus norvegicus (Rat).